We begin with the raw amino-acid sequence, 183 residues long: Acyl-homoserine-lactone synthase (183 aa).

The protein belongs to the autoinducer synthase family.

The enzyme catalyses a fatty acyl-[ACP] + S-adenosyl-L-methionine = an N-acyl-L-homoserine lactone + S-methyl-5'-thioadenosine + holo-[ACP] + H(+). Functionally, involved in the synthesis of the acyl-homoserine lactone (AHL) signal N-(3-hydroxydodecanoyl)-L-HSL (3-hydroxy-C(12)-HSL or OH-dDHL). Probably part of a quorum-sensing system with AnoR. The protein is Acyl-homoserine-lactone synthase of Acinetobacter nosocomialis.